The chain runs to 291 residues: Elongation factor Ts (291 aa).

Positions 79 to 82 (TDFV) are involved in Mg(2+) ion dislocation from EF-Tu.

The protein belongs to the EF-Ts family.

The protein localises to the cytoplasm. Associates with the EF-Tu.GDP complex and induces the exchange of GDP to GTP. It remains bound to the aminoacyl-tRNA.EF-Tu.GTP complex up to the GTP hydrolysis stage on the ribosome. The protein is Elongation factor Ts of Roseobacter denitrificans (strain ATCC 33942 / OCh 114) (Erythrobacter sp. (strain OCh 114)).